The chain runs to 312 residues: MKKELIIGTRSSPLALWQAEFTKAELSRHFPELNITLKLVKTTGDVLLDSPLSKIGDMGLFTKDIEKHLLAKEIDLAVHSLKDVPTGTPEGLVISSFTKREDTRDVIISKSGKGLKDLPPNARMATSSLRRMSQLLSMRPDLQILDIRGNLNTRFKKFDDGEFDAMMLAYAGVYRLEFSDRISEILPHDVMLPAVGQGALGIETRTDDAETIEIVRVMNDSNTEICCRAERALLRHLQGGCQIPIGCYGSYISGTLKLLAFVGSVDGKTALRNELTKPVNTPEEAEAVGIELAEVLLSMGAEKILADIRKTR.

An S-(dipyrrolylmethanemethyl)cysteine modification is found at cysteine 241.

It belongs to the HMBS family. As to quaternary structure, monomer. The cofactor is dipyrromethane.

It carries out the reaction 4 porphobilinogen + H2O = hydroxymethylbilane + 4 NH4(+). It functions in the pathway porphyrin-containing compound metabolism; protoporphyrin-IX biosynthesis; coproporphyrinogen-III from 5-aminolevulinate: step 2/4. It participates in porphyrin-containing compound metabolism; chlorophyll biosynthesis. In terms of biological role, tetrapolymerization of the monopyrrole PBG into the hydroxymethylbilane pre-uroporphyrinogen in several discrete steps. The polypeptide is Porphobilinogen deaminase (Chlorobaculum tepidum (strain ATCC 49652 / DSM 12025 / NBRC 103806 / TLS) (Chlorobium tepidum)).